Consider the following 762-residue polypeptide: N,N-dimethylformamidase beta subunit (762 aa).

As to quaternary structure, heterotetramer of two DmfA1 (alpha) and two DmfA2 (beta) subunits.

The enzyme catalyses N,N-dimethylformamide + H2O = dimethylamine + formate. Activity is slightly inhibited by Mg(2+) and Mn(2+), and slightly increased by Cu(2+). Activity is slightly inhibited by the chelating agents 8-hydroxyquinoline, ethylenediaminetetraacetate, o-phenanthroline and 2,2'-bipyridyl. In terms of biological role, hydrolyzes N,N-dimethylformamide, and to a lesser extent N,N-dimethylacetamide and N,N-diethylacetamide. Has no activity against the substituted amides N-methylformamide, N-ethylformamide, N-ethylformamide and N-methylacetamide or the unsubstituted amides formamide, nicotinamide, acetoamide, benzamide, acetamide and acrylamide. The sequence is that of N,N-dimethylformamidase beta subunit from Alcaligenes sp.